We begin with the raw amino-acid sequence, 323 residues long: Aspartate carbamoyltransferase catalytic subunit (323 aa).

The carbamoyl phosphate site is built by arginine 61 and threonine 62. Residue lysine 89 participates in L-aspartate binding. Positions 111, 144, and 147 each coordinate carbamoyl phosphate. Residues arginine 184 and arginine 238 each coordinate L-aspartate. Carbamoyl phosphate contacts are provided by glycine 279 and proline 280.

The protein belongs to the aspartate/ornithine carbamoyltransferase superfamily. ATCase family. Heterododecamer (2C3:3R2) of six catalytic PyrB chains organized as two trimers (C3), and six regulatory PyrI chains organized as three dimers (R2).

It catalyses the reaction carbamoyl phosphate + L-aspartate = N-carbamoyl-L-aspartate + phosphate + H(+). It participates in pyrimidine metabolism; UMP biosynthesis via de novo pathway; (S)-dihydroorotate from bicarbonate: step 2/3. Functionally, catalyzes the condensation of carbamoyl phosphate and aspartate to form carbamoyl aspartate and inorganic phosphate, the committed step in the de novo pyrimidine nucleotide biosynthesis pathway. The chain is Aspartate carbamoyltransferase catalytic subunit from Acaryochloris marina (strain MBIC 11017).